A 592-amino-acid chain; its full sequence is E3 ubiquitin-protein ligase RNF180 (592 aa).

At 1–564 (MKRSKELITK…DSRGWWFDMD (564 aa)) the chain is on the cytoplasmic side. At S230 the chain carries Phosphoserine. The RING-type zinc finger occupies 432–474 (CAVCLDVYFNPYMCYPCRHIFCEPCLRTLAKDNPSSTPCPLCR). The helical transmembrane segment at 565–585 (MVIIYIYSVNWVIGFIVFCFL) threads the bilayer. Residues 586 to 592 (CYFFFPF) lie on the Extracellular side of the membrane.

As to quaternary structure, interacts with ZIC2.

It is found in the endoplasmic reticulum membrane. The protein localises to the nucleus envelope. The catalysed reaction is S-ubiquitinyl-[E2 ubiquitin-conjugating enzyme]-L-cysteine + [acceptor protein]-L-lysine = [E2 ubiquitin-conjugating enzyme]-L-cysteine + N(6)-ubiquitinyl-[acceptor protein]-L-lysine.. It functions in the pathway protein modification; protein ubiquitination. Its function is as follows. E3 ubiquitin-protein ligase which promotes polyubiquitination and degradation by the proteasome pathway of ZIC2. The sequence is that of E3 ubiquitin-protein ligase RNF180 (RNF180) from Pongo abelii (Sumatran orangutan).